Here is a 328-residue protein sequence, read N- to C-terminus: Tyrosine recombinase XerC (328 aa).

The Core-binding (CB) domain occupies 13–100 (QAPHPQIAAY…AWRGWFKWMA (88 aa)). One can recognise a Tyr recombinase domain in the interval 122-319 (RLPKALSVEQ…DFQHLAKIYD (198 aa)). Residues Arg162, Lys197, His271, Arg274, and His297 contribute to the active site. Tyr306 functions as the O-(3'-phospho-DNA)-tyrosine intermediate in the catalytic mechanism.

It belongs to the 'phage' integrase family. XerC subfamily. In terms of assembly, forms a cyclic heterotetrameric complex composed of two molecules of XerC and two molecules of XerD.

The protein resides in the cytoplasm. Its function is as follows. Site-specific tyrosine recombinase, which acts by catalyzing the cutting and rejoining of the recombining DNA molecules. The XerC-XerD complex is essential to convert dimers of the bacterial chromosome into monomers to permit their segregation at cell division. It also contributes to the segregational stability of plasmids. The polypeptide is Tyrosine recombinase XerC (Ralstonia pickettii (strain 12J)).